We begin with the raw amino-acid sequence, 110 residues long: NADH-quinone oxidoreductase subunit K (110 aa).

3 helical membrane passes run 13 to 33 (LNHY…GLFM), 41 to 61 (ILMS…AFSI), and 73 to 93 (IIIL…LLIY).

This sequence belongs to the complex I subunit 4L family. NDH-1 is composed of 14 different subunits. Subunits NuoA, H, J, K, L, M, N constitute the membrane sector of the complex.

It is found in the cell inner membrane. It carries out the reaction a quinone + NADH + 5 H(+)(in) = a quinol + NAD(+) + 4 H(+)(out). In terms of biological role, NDH-1 shuttles electrons from NADH, via FMN and iron-sulfur (Fe-S) centers, to quinones in the respiratory chain. The immediate electron acceptor for the enzyme in this species is believed to be ubiquinone. Couples the redox reaction to proton translocation (for every two electrons transferred, four hydrogen ions are translocated across the cytoplasmic membrane), and thus conserves the redox energy in a proton gradient. This is NADH-quinone oxidoreductase subunit K from Rickettsia conorii (strain ATCC VR-613 / Malish 7).